Consider the following 83-residue polypeptide: MNATIREILAKFGQLPTPVDTIADEADLYAAGLSSFASVQLMLGIEEAFDIEFPDNLLNRKSFASIKAIEDTVKLILDGKEAA.

The Carrier domain maps to 1 to 80 (MNATIREILA…DTVKLILDGK (80 aa)). O-(pantetheine 4'-phosphoryl)serine is present on Ser35.

In terms of processing, 4'-phosphopantetheine is transferred from CoA to a specific serine of the apo-form of this carrier protein.

In terms of biological role, aminoacyl carrier protein. Can be charged with L-alanine, L-glycine or L-serine, via the formation of a thioester bond between the amino acid and the 4'-phosphopantetheinyl prosthetic group, catalyzed by the Atu2573 ligase. This chain is Aminoacyl carrier protein, found in Agrobacterium fabrum (strain C58 / ATCC 33970) (Agrobacterium tumefaciens (strain C58)).